The sequence spans 447 residues: Serine/threonine-protein phosphatase 2A 55 kDa regulatory subunit B gamma isoform (447 aa).

7 WD repeats span residues 22–61 (TEAD…KNAP), 87–128 (EIEE…KRPE), 171–209 (GHTY…RSFN), 220–260 (DLTE…LCDK), 279–317 (EIIS…RPIE), 334–375 (ENDC…DVTL), and 410–446 (DFTK…NSDM).

This sequence belongs to the phosphatase 2A regulatory subunit B family. As to quaternary structure, PP2A consists of a common heterodimeric core enzyme, composed of a 36 kDa catalytic subunit (subunit C) and a 65 kDa constant regulatory subunit (PR65 or subunit A), that associates with a variety of regulatory subunits. Proteins that associate with the core dimer include three families of regulatory subunits B (the R2/B/PR55/B55, R3/B''/PR72/PR130/PR59 and R5/B'/B56 families), the 48 kDa variable regulatory subunit, viral proteins, and cell signaling molecules. Interacts with IER5.

The B regulatory subunit might modulate substrate selectivity and catalytic activity, and might also direct the localization of the catalytic enzyme to a particular subcellular compartment. The polypeptide is Serine/threonine-protein phosphatase 2A 55 kDa regulatory subunit B gamma isoform (PPP2R2C) (Homo sapiens (Human)).